Here is a 416-residue protein sequence, read N- to C-terminus: Iron/alpha-ketoglutarate-dependent dioxygenase asqJ (416 aa).

A disordered region spans residues Met1–Asp53. Polar residues predominate over residues Ser34–Thr50. Residues His242, Asp244, and His319 each coordinate Fe cation.

Belongs to the PhyH family. Homodimer. Requires Fe cation as cofactor.

The catalysed reaction is (-)-4'-methoxycyclopeptine + 2-oxoglutarate + O2 = (Z)-4'-methoxydehydrocyclopeptine + succinate + CO2 + H2O. It carries out the reaction (Z)-4'-methoxydehydrocyclopeptine + 2-oxoglutarate + O2 = (-)-4'-methoxycyclopenine + succinate + CO2. It catalyses the reaction (-)-cyclopeptine + 2-oxoglutarate + O2 = (Z)-dehydrocyclopeptine + succinate + CO2 + H2O. The enzyme catalyses (Z)-dehydrocyclopeptine + 2-oxoglutarate + O2 = (-)-cyclopenine + succinate + CO2. It participates in secondary metabolite biosynthesis. The protein operates within alkaloid biosynthesis. Its pathway is mycotoxin biosynthesis. Functionally, iron/alpha-ketoglutarate-dependent dioxygenase; part of the gene cluster that mediates the biosynthesis of the aspoquinolone mycotoxins. Within the pathway, the iron/alpha-ketoglutarate-dependent dioxygenase asqJ acts as a (-)-cyclopenine synthase that converts 4'-methoxycyclopeptin into 4'-methoxydehydrocyclopeptin through dehydrogenation to form a double bond between C-alpha and C-beta of the O-methyltyrosine side chain. AsqJ is a very unique dioxygenase which is capable of catalyzing radical-mediated dehydrogenation and epoxidation reactions sequentially on a 6,7-benzo-diazepinedione substrate in the 4'-methoxyviridicatin biosynthetic pathway. AsqJ is also capable of converting cyclopeptin into dehydrocyclopeptin. The first step of the pathway is catalyzed by the nonribosomal peptide synthetase asqK that condenses anthranilic acid and O-methyl-L-tyrosine to produce 4'-methoxycyclopeptin. 4'-methoxycyclopeptin is then converted to 4'-methoxydehydrocyclopeptin by the ketoglutarate-dependent dioxygenase asqJ. AsqJ also converts its first product 4'-methoxydehydrocyclopeptin to 4'-methoxycyclopenin. The following conversion of 4'-methoxycyclopenin into 4'-methoxyviridicatin is catalyzed by the cyclopenase asqI. 4'-methoxyviridicatin is the precursor of quinolone natural products, and is further converted to quinolinone B. The prenyltransferase asqH1 then catalyzes the canonical Friedel-Crafts alkylation of quinolinone B with dimethylallyl cation to yield dimethylallyl quinolone, which is subjected to FAD-dependent dehydrogenation by the FAD-linked oxidoreductase asqF to yield conjugated aryl diene. The delta(3') double bond then serves as the site of the second alkylation with DMAPP catalyzed by the prenyltransferase asqH2 to yield a carbenium ion intermediate, which can be attacked by H(2)O to yield a styrenyl quinolone containing a C3'-hydroxyprenyl chain. The FAD-dependent monooxygenase asqG performs epoxidation of the terminal C7'-C8' olefin. Finally, after dehydratation of the epoxide at C3 by asqC, the quinolone epoxide rearrangement protein asqO catalyzes an enzymatic 3-exo-tet cyclization to yield the cyclopropyl-THF ring system in aspoquinolone. This Emericella nidulans (strain FGSC A4 / ATCC 38163 / CBS 112.46 / NRRL 194 / M139) (Aspergillus nidulans) protein is Iron/alpha-ketoglutarate-dependent dioxygenase asqJ.